The following is a 161-amino-acid chain: Regulator of ribonuclease activity A (161 aa).

This sequence belongs to the RraA family. As to quaternary structure, homotrimer. Binds to both RNA-binding sites in the C-terminal region of Rne and to RhlB.

The protein localises to the cytoplasm. Its function is as follows. Globally modulates RNA abundance by binding to RNase E (Rne) and regulating its endonucleolytic activity. Can modulate Rne action in a substrate-dependent manner by altering the composition of the degradosome. Modulates RNA-binding and helicase activities of the degradosome. The chain is Regulator of ribonuclease activity A from Klebsiella pneumoniae (strain 342).